The sequence spans 73 residues: Translation initiation factor IF-1 (73 aa).

One can recognise an S1-like domain in the interval 1–72; sequence MAKEDAIEVE…NRGRITYRSK (72 aa).

It belongs to the IF-1 family. As to quaternary structure, component of the 30S ribosomal translation pre-initiation complex which assembles on the 30S ribosome in the order IF-2 and IF-3, IF-1 and N-formylmethionyl-tRNA(fMet); mRNA recruitment can occur at any time during PIC assembly.

It localises to the cytoplasm. Functionally, one of the essential components for the initiation of protein synthesis. Stabilizes the binding of IF-2 and IF-3 on the 30S subunit to which N-formylmethionyl-tRNA(fMet) subsequently binds. Helps modulate mRNA selection, yielding the 30S pre-initiation complex (PIC). Upon addition of the 50S ribosomal subunit IF-1, IF-2 and IF-3 are released leaving the mature 70S translation initiation complex. The sequence is that of Translation initiation factor IF-1 from Syntrophobacter fumaroxidans (strain DSM 10017 / MPOB).